Here is a 495-residue protein sequence, read N- to C-terminus: Putative lon protease homolog (495 aa).

ATP is bound at residue 52–59 (GPPGVGKS). Residues 471-495 (YSSETTGSQRDSTYNYANMDDRSYE) form a disordered region. A compositionally biased stretch (polar residues) spans 472–486 (SSETTGSQRDSTYNY).

The protein belongs to the peptidase S16 family.

This is Putative lon protease homolog from Thermoplasma volcanium (strain ATCC 51530 / DSM 4299 / JCM 9571 / NBRC 15438 / GSS1).